A 207-amino-acid polypeptide reads, in one-letter code: Outer-membrane lipoprotein LolB (207 aa).

The first 21 residues, 1–21 (MPMRKRHFYRLLPLASLLLAA), serve as a signal peptide directing secretion. Cys-22 carries the N-palmitoyl cysteine lipid modification. The S-diacylglycerol cysteine moiety is linked to residue Cys-22.

This sequence belongs to the LolB family. As to quaternary structure, monomer.

It is found in the cell outer membrane. Functionally, plays a critical role in the incorporation of lipoproteins in the outer membrane after they are released by the LolA protein. The chain is Outer-membrane lipoprotein LolB from Yersinia pestis bv. Antiqua (strain Antiqua).